Consider the following 452-residue polypeptide: MSMASLYRRSLSPPAIDFASFEGKQIFNEALQKGTMEGFFGLISYFQTQSEPAFCGLASLSMVLNSLSIDPGRKWKGPWRWFDESMLECCEPLEIVKDKGISFGKVVCLAHSSGAKVEAFRTNQSTIDDFRKYVVKCSTSDNCHMISTYHRQVLKQTGTGHFSPIGGYNAERDMALILDVARFKYPPHWVPLKLLWDAMDSIDQSTGRRRGFMLISRPHREPGLLYTLSCKDESWISIAKYLKEDVPRLVSSQHVDTIERILYVVFKSLPANFNQFIKWMAEIRRTEDVNQNLSSEEKSRLKLKQELLKQVQETKLFKHVDKFLSSVYEDNLPYVAAKVYCDGDEILSGYESDESCCKETCVKCIKGLGEEKVTVVAYPSGNDVFTALLLALPPQTWSGIKDQSLLQEMKQLISMVSHPTLLQQEVLHLRRQLEMLKRCQENKEDEELSAPA.

The Peptidase C83 domain occupies 1–220 (MSMASLYRRS…GFMLISRPHR (220 aa)). The stretch at 287 to 315 (EDVNQNLSSEEKSRLKLKQELLKQVQETK) forms a coiled coil.

Belongs to the phytochelatin synthase family. As to expression, expressed in shoots, roots, leaves, stems and flowers.

It catalyses the reaction [Glu(-Cys)](n)-Gly + glutathione + H(+) = [Glu(-Cys)](n+1)-Gly + glycine. Its activity is regulated as follows. Requires cadmium for activity. Also activated in heterologous system by AsO(4)(3-) ions, but not by Cu(2+), Zn(2+), Mn(2+) or Ni(2+) ions. Its function is as follows. Involved in the synthesis of phytochelatins (PC) and homophytochelatins (hPC), the heavy-metal-binding peptides of plants. The sequence is that of Glutathione gamma-glutamylcysteinyltransferase 2 (PCS2) from Arabidopsis thaliana (Mouse-ear cress).